Consider the following 336-residue polypeptide: MNGREHRRGDEAARREARSILFQNQDRSIVLIDVPTSIEEAQASPEEVGCDAGPLRKRRRLISSEPPHLPFKTPEPKAGSGGLTESVSDLMIAAAATEALRVLQESYAGPFCLPRVTRPNPLKSAFVPKGSFFLHGTVSSERDRFAAEAPVFDLIVLDPPWPNRSARRKQRNYRVADSLGSIRETLSLIPIAAHLAPDGLLAVWITNKAGVVELLTGPRGLFAQWGLEQVDEWTWLKITTSGEPIVDVGSTWRKPWERILIARRRGSSRKPACRGRVLVSVPDLHSRKPNLRGLFEDVLVPSNKGLEIFARNLTAGWWSWGDEVLKFQQPEYWVES.

A disordered region spans residues 61 to 83 (LISSEPPHLPFKTPEPKAGSGGL).

The protein belongs to the MT-A70-like family.

The catalysed reaction is an adenosine in mRNA + S-adenosyl-L-methionine = an N(6)-methyladenosine in mRNA + S-adenosyl-L-homocysteine + H(+). Its function is as follows. N6-methyladenosine RNA methyltransferase that plays a crucial role in fungal phenotypic traits, virulence, and stress tolerance. Mediates the methylation of mRNAs to produce N6-methyladenosine (m6A)-containing mRNAs. M6A is a modification present at internal sites of mRNAs and some non-coding RNAs and plays a role in mRNA stability and processing. Mediates specifically acid phosphatase APHA mRNA stability through a YTHDF1-dependent m6A modification of the A1306, A1341, and A1666 key methylation modification sites. Also mediates the stability of the transcription factor ZAP1 mRNA via modification of residue A1935 localized in the 3'UTR. In Cryphonectria parasitica (strain ATCC 38755 / EP155), this protein is N6-methyladenosine RNA methyltransferase MTA1.